The following is a 395-amino-acid chain: Indoleacetate--lysine synthetase (395 aa).

This sequence belongs to the ATP-dependent AMP-binding enzyme family.

It carries out the reaction (indol-3-yl)acetate + L-lysine + ATP = N(6)-[(indole-3-yl)acetyl]-L-lysine + ADP + phosphate + H(+). In terms of biological role, conversion of IAA to IAA-lysine. This chain is Indoleacetate--lysine synthetase (iaaL), found in Pseudomonas savastanoi (Pseudomonas syringae pv. savastanoi).